The following is a 506-amino-acid chain: Cytochrome P450 94B3 (506 aa).

Residues 2-22 (AFLLSFLILAFLITIIFFLSS) traverse the membrane as a helical segment. C447 contributes to the heme binding site.

Belongs to the cytochrome P450 family. It depends on heme as a cofactor.

It is found in the membrane. It localises to the endoplasmic reticulum membrane. The enzyme catalyses a jasmonyl-L-amino acid + reduced [NADPH--hemoprotein reductase] + O2 = a 12-hydroxyjasmonyl-L-alpha-amino acid + oxidized [NADPH--hemoprotein reductase] + H2O + H(+). The catalysed reaction is L-isoleucine-(+)-7-isojasmonate + NADPH + O2 + H(+) = L-isoleucine-(+)-12-hydroxy-7-isojasmonate + NADP(+) + H2O. It carries out the reaction a jasmonyl-L-isoleucinate + NADPH + O2 + H(+) = L-isoleucine-12-hydroxyjasmonate + NADP(+) + H2O. In terms of biological role, hydroxylase involved in the oxidation of the plant hormone jasmonoyl-L-isoleucine (JA-Ile), a bioactive phytohormone of the jasmonate-mediated signaling pathway. Converts JA-Ile to 12-hydroxy-JA-Ile. Exerts negative feedback control on JA-Ile levels and plays a key role in attenuation of jasmonate responses. Negatively regulates the expression of wound-induced genes TIFY11A/JAZ5, TIFY5A/JAZ8 and TIFY5A/JAZ10. Catalyzes the hydroxylation of jasmonoyl-L-valine (JA-Val), jasmonoyl-L-leucine (JA-Leu) and jasmonoyl-L-phenylalanine (JA-Phe) in vitro. Converts JA-Val, JA-Leu and JA-Phe to 12-hydroxy-JA-Val, 12-hydroxy-JA-Leu and 12-hydroxy-JA-Phe, respectively. This chain is Cytochrome P450 94B3, found in Arabidopsis thaliana (Mouse-ear cress).